A 411-amino-acid polypeptide reads, in one-letter code: Citrate synthase (411 aa).

Catalysis depends on residues His-304 and Asp-363.

Belongs to the citrate synthase family.

It catalyses the reaction oxaloacetate + acetyl-CoA + H2O = citrate + CoA + H(+). It functions in the pathway carbohydrate metabolism; tricarboxylic acid cycle; isocitrate from oxaloacetate: step 1/2. This is Citrate synthase (gltA) from Rickettsia australis.